A 153-amino-acid polypeptide reads, in one-letter code: Insulin-like growth factor 1.S (153 aa).

Disulfide bonds link cysteine 29/cysteine 38, cysteine 54/cysteine 96, cysteine 66/cysteine 109, and cysteine 100/cysteine 109. The tract at residues glycine 49–threonine 77 is b. A c region spans residues glycine 78–arginine 89. The tract at residues glycine 90 to alanine 110 is a. The interval proline 111 to alanine 118 is d. Residues arginine 119 to methionine 153 constitute a propeptide, e peptide. The tract at residues arginine 119–methionine 153 is disordered. A compositionally biased stretch (basic and acidic residues) spans arginine 125–proline 138. The span at lysine 139–methionine 153 shows a compositional bias: polar residues.

It belongs to the insulin family. As to expression, expressed in adult liver, lung, heart, kidney and peritoneal fat.

It localises to the secreted. In terms of biological role, the insulin-like growth factors, isolated from plasma, are structurally and functionally related to insulin but have a much higher growth-promoting activity. Promotes head development by inhibiting Wnt signaling during embryogenesis. Acts as a ligand for IGF1R. Binds to the alpha subunit of IGF1R, leading to the activation of the intrinsic tyrosine kinase activity which autophosphorylates tyrosine residues in the beta subunit thus initiatiating a cascade of down-stream signaling events leading to activation of the PI3K-AKT/PKB and the Ras-MAPK pathways. Binds to integrins. Its binding to integrins and subsequent ternary complex formation with integrins and IGFR1 are essential for IGF1 signaling. This chain is Insulin-like growth factor 1.S, found in Xenopus laevis (African clawed frog).